Reading from the N-terminus, the 118-residue chain is Ribonuclease P protein component (118 aa).

This sequence belongs to the RnpA family. Consists of a catalytic RNA component (M1 or rnpB) and a protein subunit.

It carries out the reaction Endonucleolytic cleavage of RNA, removing 5'-extranucleotides from tRNA precursor.. Its function is as follows. RNaseP catalyzes the removal of the 5'-leader sequence from pre-tRNA to produce the mature 5'-terminus. It can also cleave other RNA substrates such as 4.5S RNA. The protein component plays an auxiliary but essential role in vivo by binding to the 5'-leader sequence and broadening the substrate specificity of the ribozyme. This chain is Ribonuclease P protein component, found in Rickettsia akari (strain Hartford).